Consider the following 276-residue polypeptide: Malectin-A (276 aa).

An N-terminal signal peptide occupies residues 1–26; that stretch reads MLSIRTVLGPLATILLTVLGPFGAHG. At 27–253 the chain is on the lumenal side; it reads SGLADKVIWA…TPNPYASDNS (227 aa). A carbohydrate-binding residues include Tyr-67, Tyr-89, Tyr-116, Phe-117, and Asp-186. The interval 204 to 247 is disordered; that stretch reads PMLQPHPGLEKKEEEEEEEEEEGSTSKKQINKNRVQSGPRTPNP. The segment covering 216-226 has biased composition (acidic residues); sequence EEEEEEEEEEG. Over residues 229-247 the composition is skewed to polar residues; the sequence is SKKQINKNRVQSGPRTPNP. N-linked (GlcNAc...) asparagine glycosylation occurs at Asn-252. A helical membrane pass occupies residues 254 to 274; it reads SLMFPILVAFGVFIPTLFCLC. Residues 275–276 are Cytoplasmic-facing; the sequence is RL.

This sequence belongs to the malectin family. Widely expressed throughout development including the anterior neuroectoderm and neural crest at stages 18 and 20, and the retina, hatching gland, otic vesicle, epibranchial placodes, pronephros and tail tip of later states. At stage 41, expressed in the liver, pancreas, branchial arches and proctodeum. Expressed broadly in adults in fat, intestine, gall bladder, eye, muscle, kidney, stomach, liver, heart, pancreas and lung.

It is found in the endoplasmic reticulum membrane. Its function is as follows. Carbohydrate-binding protein with a strong ligand preference for Glc2-N-glycan. May play a role in the early steps of protein N-glycosylation. Can bind di- or higher oligomers but not monomers of glucose, including maltose, maltotriose, maltotetraose, maltoheptaose, nigerose, kojibose, cellobiose and isomaltose, although based on their subcellular locations, these are unlikely to all be physiological ligands. The sequence is that of Malectin-A from Xenopus laevis (African clawed frog).